The following is an 840-amino-acid chain: MMMHMAETRTRPAPMMAASLQMVTADMIAAAAKRAEQRIAPLWPLRNFVAVNPYLGLLDYSFETAAELLARRAGARTTAPRAFYAQAIRDGRITDADLASALAEGSPSPGAPATVEALKAFALSNAPEPTFTTLPTVADVAREITGVNWADIVTDSISAWAGAYFDLGQSYWRSPWKPMSAYAAWRAEATYDRTPHIRGAQGFHQALRELPESAMETIIAAVEMLHIPADGLEAYLHRLLLTIHGWAGYARYLRWEAELYGGADHTLTDLLAIRLVWEVALWRSFASRGMAEAWRTRSHELVGDQLDAALQRAIAGDLLLQRAFEKAYQRQLFACLGTPKPVKHATRKRAQAAFCIDVRSEIFRRALETVTDEIETIGFAGFFGFPIEYVPLAETRGGAQCPVLLTPQFVIAESVGGASETEVTAVIEKRALNQRVAKVWRMFKFGPVSCFGFVGPVGLAYVRKLLLDTLGITRPVPHPATFGLDARTRERVKPSLEPRAIGGRTTGMSPEQRVNVAEGALKAMSLTSNFARLVLLAGHGSTTVNNPHATGLDCGACGGHTGEANVRVAVQILNDPAARTGLKARGIVIPDDTVFVAGLHDTTTDDVTIFDKNDIPASHADDLRRLEADLAAAGRLARAERAALLKIDPKGNIDGAVRQRSRDWSQVRPEWGLAGCAAFIAAPRDRTAGAKLDGRSFLHNYDWRQDEGFGVLELIMTAPMIVASWINLQYYGSTVDNRVFGSGNKTLHNVVGTLGVLEGNSGDLRVGLPWQSVHDGERYVHEPMRLHVMIEAPIEAMTAIIARHEQVRQLLDNGWLYLFALDERGKVTHTYAGGLRWEAC.

Residues Cys355, Asp357, His539, and Cys554 each contribute to the Zn(2+) site.

This sequence belongs to the inorganic carbon transporter (TC 9.A.2) DabA family. Forms a complex with DabB. The cofactor is Zn(2+).

It localises to the cell membrane. In terms of biological role, part of an energy-coupled inorganic carbon pump. The polypeptide is Probable inorganic carbon transporter subunit DabA (Roseiflexus castenholzii (strain DSM 13941 / HLO8)).